A 203-amino-acid chain; its full sequence is MRIGVLGYQGGVYEHVYMLRRTFDRLGVHGEAVVVKKPEDLKGLDGVIIPGGESTTIGILAKRLGVLEPLREQVLNGLPAMGTCAGAIILAGKVRDKVVGEKSQPLLGVMRVEVVRNFFGRQRESFEADLEIEGLDGRFRGVFIRSPAITAAESPARIISWLDYNGQRVGVAAVQGPLLATSFHPELTGDTRLHELWLRLVKR.

52–54 (GES) serves as a coordination point for L-glutamine. Cysteine 84 serves as the catalytic Nucleophile. L-glutamine-binding positions include arginine 116 and 144–145 (IR). Catalysis depends on charge relay system residues histidine 184 and glutamate 186.

It belongs to the glutaminase PdxT/SNO family. In terms of assembly, in the presence of PdxS, forms a dodecamer of heterodimers. Only shows activity in the heterodimer.

The enzyme catalyses aldehydo-D-ribose 5-phosphate + D-glyceraldehyde 3-phosphate + L-glutamine = pyridoxal 5'-phosphate + L-glutamate + phosphate + 3 H2O + H(+). It catalyses the reaction L-glutamine + H2O = L-glutamate + NH4(+). The protein operates within cofactor biosynthesis; pyridoxal 5'-phosphate biosynthesis. In terms of biological role, catalyzes the hydrolysis of glutamine to glutamate and ammonia as part of the biosynthesis of pyridoxal 5'-phosphate. The resulting ammonia molecule is channeled to the active site of PdxS. The sequence is that of Pyridoxal 5'-phosphate synthase subunit PdxT from Aeropyrum pernix (strain ATCC 700893 / DSM 11879 / JCM 9820 / NBRC 100138 / K1).